Consider the following 226-residue polypeptide: ATP synthase F(0) complex subunit a (226 aa).

The next 6 membrane-spanning stretches (helical) occupy residues 12-32, 68-88, 97-117, 138-158, 164-184, and 200-222; these read PTIL…LLIP, WSLM…LGLL, QLSM…ATGF, IPML…ALAV, ITAG…LSTI, and TTLE…SLYL.

Belongs to the ATPase A chain family. Component of the ATP synthase complex composed at least of ATP5F1A/subunit alpha, ATP5F1B/subunit beta, ATP5MC1/subunit c (homooctomer), MT-ATP6/subunit a, MT-ATP8/subunit 8, ATP5ME/subunit e, ATP5MF/subunit f, ATP5MG/subunit g, ATP5MK/subunit k, ATP5MJ/subunit j, ATP5F1C/subunit gamma, ATP5F1D/subunit delta, ATP5F1E/subunit epsilon, ATP5PF/subunit F6, ATP5PB/subunit b, ATP5PD/subunit d, ATP5PO/subunit OSCP. ATP synthase complex consists of a soluble F(1) head domain (subunits alpha(3) and beta(3)) - the catalytic core - and a membrane F(0) domain - the membrane proton channel (subunits c, a, 8, e, f, g, k and j). These two domains are linked by a central stalk (subunits gamma, delta, and epsilon) rotating inside the F1 region and a stationary peripheral stalk (subunits F6, b, d, and OSCP). Interacts with DNAJC30; interaction is direct.

It is found in the mitochondrion inner membrane. It carries out the reaction H(+)(in) = H(+)(out). Functionally, subunit a, of the mitochondrial membrane ATP synthase complex (F(1)F(0) ATP synthase or Complex V) that produces ATP from ADP in the presence of a proton gradient across the membrane which is generated by electron transport complexes of the respiratory chain. ATP synthase complex consist of a soluble F(1) head domain - the catalytic core - and a membrane F(1) domain - the membrane proton channel. These two domains are linked by a central stalk rotating inside the F(1) region and a stationary peripheral stalk. During catalysis, ATP synthesis in the catalytic domain of F(1) is coupled via a rotary mechanism of the central stalk subunits to proton translocation. With the subunit c (ATP5MC1), forms the proton-conducting channel in the F(0) domain, that contains two crucial half-channels (inlet and outlet) that facilitate proton movement from the mitochondrial intermembrane space (IMS) into the matrix. Protons are taken up via the inlet half-channel and released through the outlet half-channel, following a Grotthuss mechanism. This chain is ATP synthase F(0) complex subunit a, found in Hylobates lar (Lar gibbon).